We begin with the raw amino-acid sequence, 180 residues long: Ribulose bisphosphate carboxylase small subunit, chloroplastic 2 (180 aa).

A chloroplast-targeting transit peptide spans 1–56 (MASSVMSSAAVATSTNAAQASMVAPFTGLKSAASFPVSRKQNLDITSIASNGGRVQ).

The protein belongs to the RuBisCO small chain family. As to quaternary structure, heterohexadecamer of 8 large and 8 small subunits.

It is found in the plastid. The protein localises to the chloroplast. Its function is as follows. RuBisCO catalyzes two reactions: the carboxylation of D-ribulose 1,5-bisphosphate, the primary event in carbon dioxide fixation, as well as the oxidative fragmentation of the pentose substrate. Both reactions occur simultaneously and in competition at the same active site. Although the small subunit is not catalytic it is essential for maximal activity. The chain is Ribulose bisphosphate carboxylase small subunit, chloroplastic 2 from Petunia hybrida (Petunia).